A 197-amino-acid chain; its full sequence is UPF0200 protein MJ1399 (197 aa).

G8–S15 is an ATP binding site.

This sequence belongs to the UPF0200 family.

This is UPF0200 protein MJ1399 from Methanocaldococcus jannaschii (strain ATCC 43067 / DSM 2661 / JAL-1 / JCM 10045 / NBRC 100440) (Methanococcus jannaschii).